The chain runs to 700 residues: Polyribonucleotide nucleotidyltransferase (700 aa).

Aspartate 487 and aspartate 493 together coordinate Mg(2+). The region spanning 554-613 is the KH domain; it reads PRLLTIKIHPDKIRDVIGKGGSTIQAITKDTGTQIDIQDDGTIVIASVNNAAAREAKRRI. The 69-residue stretch at 623 to 691 folds into the S1 motif domain; it reads GRIYEGKVAK…KQGRIRLSIK (69 aa).

This sequence belongs to the polyribonucleotide nucleotidyltransferase family. As to quaternary structure, component of the RNA degradosome, which is a multiprotein complex involved in RNA processing and mRNA degradation. It depends on Mg(2+) as a cofactor.

It is found in the cytoplasm. The enzyme catalyses RNA(n+1) + phosphate = RNA(n) + a ribonucleoside 5'-diphosphate. Its function is as follows. Involved in mRNA degradation. Catalyzes the phosphorolysis of single-stranded polyribonucleotides processively in the 3'- to 5'-direction. The polypeptide is Polyribonucleotide nucleotidyltransferase (Xylella fastidiosa (strain M12)).